Here is a 225-residue protein sequence, read N- to C-terminus: NAD(P)H-quinone oxidoreductase subunit K, chloroplastic (225 aa).

Residues Cys-43, Cys-44, Cys-108, and Cys-139 each coordinate [4Fe-4S] cluster.

This sequence belongs to the complex I 20 kDa subunit family. As to quaternary structure, NDH is composed of at least 16 different subunits, 5 of which are encoded in the nucleus. The cofactor is [4Fe-4S] cluster.

It localises to the plastid. The protein resides in the chloroplast thylakoid membrane. It catalyses the reaction a plastoquinone + NADH + (n+1) H(+)(in) = a plastoquinol + NAD(+) + n H(+)(out). The catalysed reaction is a plastoquinone + NADPH + (n+1) H(+)(in) = a plastoquinol + NADP(+) + n H(+)(out). Its function is as follows. NDH shuttles electrons from NAD(P)H:plastoquinone, via FMN and iron-sulfur (Fe-S) centers, to quinones in the photosynthetic chain and possibly in a chloroplast respiratory chain. The immediate electron acceptor for the enzyme in this species is believed to be plastoquinone. Couples the redox reaction to proton translocation, and thus conserves the redox energy in a proton gradient. This is NAD(P)H-quinone oxidoreductase subunit K, chloroplastic from Vitis vinifera (Grape).